Consider the following 252-residue polypeptide: Large ribosomal subunit protein uL4 (252 aa).

It belongs to the universal ribosomal protein uL4 family. As to quaternary structure, part of the 50S ribosomal subunit.

Functionally, one of the primary rRNA binding proteins, this protein initially binds near the 5'-end of the 23S rRNA. It is important during the early stages of 50S assembly. It makes multiple contacts with different domains of the 23S rRNA in the assembled 50S subunit and ribosome. Forms part of the polypeptide exit tunnel. This chain is Large ribosomal subunit protein uL4, found in Methanococcus vannielii (strain ATCC 35089 / DSM 1224 / JCM 13029 / OCM 148 / SB).